A 280-amino-acid polypeptide reads, in one-letter code: UDP-3-O-acyl-N-acetylglucosamine deacetylase (280 aa).

3 residues coordinate Zn(2+): H77, H238, and D242. H265 functions as the Proton donor in the catalytic mechanism.

Belongs to the LpxC family. Zn(2+) serves as cofactor.

It carries out the reaction a UDP-3-O-[(3R)-3-hydroxyacyl]-N-acetyl-alpha-D-glucosamine + H2O = a UDP-3-O-[(3R)-3-hydroxyacyl]-alpha-D-glucosamine + acetate. It functions in the pathway glycolipid biosynthesis; lipid IV(A) biosynthesis; lipid IV(A) from (3R)-3-hydroxytetradecanoyl-[acyl-carrier-protein] and UDP-N-acetyl-alpha-D-glucosamine: step 2/6. In terms of biological role, catalyzes the hydrolysis of UDP-3-O-myristoyl-N-acetylglucosamine to form UDP-3-O-myristoylglucosamine and acetate, the committed step in lipid A biosynthesis. The chain is UDP-3-O-acyl-N-acetylglucosamine deacetylase from Trichormus variabilis (strain ATCC 29413 / PCC 7937) (Anabaena variabilis).